The primary structure comprises 738 residues: Conserved oligomeric Golgi complex subunit 4 (738 aa).

It belongs to the COG4 family. As to quaternary structure, component of the conserved oligomeric Golgi complex which is composed of eight different subunits and is required for normal Golgi morphology and localization. Interacts with COG2 and COG3.

The protein localises to the golgi apparatus membrane. Required for normal Golgi function. The chain is Conserved oligomeric Golgi complex subunit 4 from Arabidopsis thaliana (Mouse-ear cress).